The sequence spans 111 residues: Class I hydrophobin 10 (111 aa).

Residues 1-17 form the signal peptide; that stretch reads MLFNTFVVTALASLAAA. Disulfide bonds link Cys30–Cys90, Cys37–Cys84, Cys38–Cys71, and Cys91–Cys104.

Belongs to the fungal hydrophobin family. As to quaternary structure, self-assembles to form functional amyloid fibrils called rodlets. Self-assembly into fibrillar rodlets occurs spontaneously at hydrophobic:hydrophilic interfaces and the rodlets further associate laterally to form amphipathic monolayers.

The protein localises to the secreted. It localises to the cell wall. Its function is as follows. Aerial growth, conidiation, and dispersal of filamentous fungi in the environment rely upon a capability of their secreting small amphipathic proteins called hydrophobins (HPBs) with low sequence identity. Class I can self-assemble into an outermost layer of rodlet bundles on aerial cell surfaces, conferring cellular hydrophobicity that supports fungal growth, development and dispersal; whereas Class II form highly ordered films at water-air interfaces through intermolecular interactions but contribute nothing to the rodlet structure. The protein is Class I hydrophobin 10 of Pleurotus ostreatus (strain PC15) (Oyster mushroom).